The following is a 708-amino-acid chain: ABC transporter G family member 18 (708 aa).

The ABC transporter domain occupies 75–317 (RRRFDFSRRK…FSSFGRPIPE (243 aa)). ATP is bound at residue 109-116 (GGSGAGKS). One can recognise an ABC transmembrane type-2 domain in the interval 402 to 612 (AETFILAKRY…PYEAVLINEF (211 aa)). Helical transmembrane passes span 421–441 (LIGM…TVYW), 456–476 (FFAF…PVFI), 508–528 (LLAL…LSGG), 537–557 (LIIY…SGLI), 560–580 (VMMS…LGGF), 589–609 (LYWI…AVLI), and 681–701 (LWIT…SLLF).

Belongs to the ABC transporter superfamily. ABCG family. Eye pigment precursor importer (TC 3.A.1.204) subfamily.

It localises to the membrane. In Arabidopsis thaliana (Mouse-ear cress), this protein is ABC transporter G family member 18 (ABCG18).